The chain runs to 278 residues: Secreted RxLR effector protein 151 (278 aa).

An N-terminal signal peptide occupies residues 1–18; sequence MRNRAVLFGLFFIGYSSC. The RxLR-dEER motif lies at 49 to 64; sequence RLLQVDGPKRILAEER.

Belongs to the RxLR effector family.

The protein localises to the secreted. It is found in the host endoplasmic reticulum membrane. Secreted effector that completely suppresses the host cell death induced by cell death-inducing proteins. The protein is Secreted RxLR effector protein 151 of Plasmopara viticola (Downy mildew of grapevine).